A 250-amino-acid chain; its full sequence is Proteasome subunit alpha type-7-B (250 aa).

K62 participates in a covalent cross-link: Glycyl lysine isopeptide (Lys-Gly) (interchain with G-Cter in ubiquitin).

This sequence belongs to the peptidase T1A family. Component of the 20S core complex of the 26S proteasome. The 26S proteasome is composed of a core protease (CP), known as the 20S proteasome, capped at one or both ends by the 19S regulatory particle (RP/PA700). The 20S proteasome core is composed of 28 subunits that are arranged in four stacked rings, resulting in a barrel-shaped structure. The two end rings are each formed by seven alpha subunits, and the two central rings are each formed by seven beta subunits. The catalytic chamber with the active sites is on the inside of the barrel.

The protein localises to the cytoplasm. Its subcellular location is the nucleus. The proteasome is a multicatalytic proteinase complex which is characterized by its ability to cleave peptides with Arg, Phe, Tyr, Leu, and Glu adjacent to the leaving group at neutral or slightly basic pH. The proteasome has an ATP-dependent proteolytic activity. The sequence is that of Proteasome subunit alpha type-7-B (PAD2) from Arabidopsis thaliana (Mouse-ear cress).